The chain runs to 267 residues: Non-homologous end joining protein Ku (267 aa).

The Ku domain maps to 11–195 (AVGQVSCAVA…KVKGEMLELA (185 aa)). The tract at residues 229-267 (GRKPKRKAAPKKAREPSDLMAALRESVAATERPRRRKAG) is disordered.

It belongs to the prokaryotic Ku family. Homodimer. Interacts with LigD.

With LigD forms a non-homologous end joining (NHEJ) DNA repair enzyme, which repairs dsDNA breaks with reduced fidelity. Binds linear dsDNA with 5'- and 3'- overhangs but not closed circular dsDNA nor ssDNA. Recruits and stimulates the ligase activity of LigD. The chain is Non-homologous end joining protein Ku from Cereibacter sphaeroides (strain KD131 / KCTC 12085) (Rhodobacter sphaeroides).